The primary structure comprises 213 residues: MAKNYYDITLALAGICQSARLVQQLAHQGHCDADALHVSLNSIIDMNPSSTLAVFGGSEANLRVGLETLLGVLNASSRQGLNAELTRYTLSLMVLKRKLSSAKGALDTLGNRINGLQRQLEHFDLQSETLMSAMAAIYVDVISPLGPRIQVTGSPAVLQSPQVQAKVRATLLAGIRAAVLWHQVGGGRLQLMFSRNRLTTQAKQILAHLTPEL.

Residues 99–126 are a coiled coil; the sequence is LSSAKGALDTLGNRINGLQRQLEHFDLQ.

Belongs to the HflD family. Interacts with CII protein from phage lambda.

Its subcellular location is the cytoplasm. The protein localises to the cell inner membrane. Its function is as follows. Negative regulator of phage lambda lysogenization. Contributes to the degradation of the phage regulatory protein CII. Acts probably by holding CII on the membrane surface, away from the target promoters, but close to the FtsH protease. The protein is High frequency lysogenization protein HflD of Escherichia coli O157:H7.